The sequence spans 283 residues: Elongation factor Ts (283 aa).

The tract at residues 79 to 82 (TDFV) is involved in Mg(2+) ion dislocation from EF-Tu.

It belongs to the EF-Ts family.

Its subcellular location is the cytoplasm. Associates with the EF-Tu.GDP complex and induces the exchange of GDP to GTP. It remains bound to the aminoacyl-tRNA.EF-Tu.GTP complex up to the GTP hydrolysis stage on the ribosome. The sequence is that of Elongation factor Ts from Shewanella baltica (strain OS155 / ATCC BAA-1091).